Here is a 459-residue protein sequence, read N- to C-terminus: Putrescine aminotransferase (459 aa).

Pyridoxal 5'-phosphate contacts are provided by residues 150–151 (GT) and Q274. K300 is subject to N6-(pyridoxal phosphate)lysine. T332 is a binding site for pyridoxal 5'-phosphate.

The protein belongs to the class-III pyridoxal-phosphate-dependent aminotransferase family. Putrescine aminotransferase subfamily. It depends on pyridoxal 5'-phosphate as a cofactor.

The catalysed reaction is an alkane-alpha,omega-diamine + 2-oxoglutarate = an omega-aminoaldehyde + L-glutamate. It catalyses the reaction putrescine + 2-oxoglutarate = 1-pyrroline + L-glutamate + H2O. The enzyme catalyses cadaverine + 2-oxoglutarate = 5-aminopentanal + L-glutamate. It participates in amine and polyamine degradation; putrescine degradation; 4-aminobutanal from putrescine (transaminase route): step 1/1. Catalyzes the aminotransferase reaction from putrescine to 2-oxoglutarate, leading to glutamate and 4-aminobutanal, which spontaneously cyclizes to form 1-pyrroline. This is the first step in one of two pathways for putrescine degradation, where putrescine is converted into 4-aminobutanoate (gamma-aminobutyrate or GABA) via 4-aminobutanal. Also functions as a cadaverine transaminase in a a L-lysine degradation pathway to succinate that proceeds via cadaverine, glutarate and L-2-hydroxyglutarate. This is Putrescine aminotransferase from Escherichia coli O6:K15:H31 (strain 536 / UPEC).